The sequence spans 143 residues: uncharacterized protein (143 aa).

The interval 1-37 is disordered; that stretch reads MSAPASSSAIAPSQPTAPGHARHSASWSASASDPSGA.

Belongs to the dynein light chain Tctex-type family.

This is an uncharacterized protein from Mycosarcoma maydis (Corn smut fungus).